The primary structure comprises 152 residues: Calcium-binding protein SPEC 1A (152 aa).

4 EF-hand domains span residues 10–45 (EEVTEFKRRFKNKDTDKSKSITAEELGEFFKSTGKS), 46–81 (YTDKQIDKMISDVDTDESGTIDFSEMLMGIAEQMVK), 84–119 (WKEEHYTKAFDDMDKDGNGSLSPQELREALSASKPP), and 120–152 (MKRKKIKAIIQKADANKDGKIDREEFMKLIKSC). Ca(2+) is bound by residues Asp-23, Asp-25, Ser-27, Ser-29, Glu-34, Asp-59, Asp-61, Ser-63, Thr-65, Glu-70, Asp-97, Asp-99, Asn-101, Ser-103, Glu-108, Asp-133, Asn-135, Asp-137, Lys-139, and Glu-144. The tract at residues 95–121 (DMDKDGNGSLSPQELREALSASKPPMK) is disordered.

In terms of tissue distribution, found in cell lineages giving rise to the aboral ectoderm, a squamous epithelium covering the surface of the late stage embryo and larva.

Its function is as follows. Calcium-binding protein involved in larval development and metamorphosis. Likely to function as calcium buffers mediating the transport of calcium from the sea water to the blastocoel where calcium is required for skeleton formation. The sequence is that of Calcium-binding protein SPEC 1A (SPEC1) from Strongylocentrotus purpuratus (Purple sea urchin).